A 133-amino-acid polypeptide reads, in one-letter code: Large ribosomal subunit protein uL14 (133 aa).

Belongs to the universal ribosomal protein uL14 family. In terms of assembly, part of the 50S ribosomal subunit. Forms a cluster with proteins L3 and L19. In the 70S ribosome, L14 and L19 interact and together make contacts with the 16S rRNA in bridges B5 and B8.

Functionally, binds to 23S rRNA. Forms part of two intersubunit bridges in the 70S ribosome. In Gloeobacter violaceus (strain ATCC 29082 / PCC 7421), this protein is Large ribosomal subunit protein uL14.